We begin with the raw amino-acid sequence, 56 residues long: Per os infectivity factor AC110 (56 aa).

Its function is as follows. Plays an essential role in the process of oral infection. May participate in the crossing of occlusion-derived virions through the host peritrophic membrane during oral infection. This chain is Per os infectivity factor AC110, found in Autographa californica nuclear polyhedrosis virus (AcMNPV).